The primary structure comprises 104 residues: L-rhamnose mutarotase (104 aa).

Tyr-18 is a binding site for substrate. Catalysis depends on His-22, which acts as the Proton donor. Substrate-binding positions include Tyr-41 and 76 to 77; that span reads WW.

Belongs to the rhamnose mutarotase family. Homodimer.

The protein localises to the cytoplasm. It catalyses the reaction alpha-L-rhamnose = beta-L-rhamnose. It participates in carbohydrate metabolism; L-rhamnose metabolism. Its function is as follows. Involved in the anomeric conversion of L-rhamnose. In Salmonella agona (strain SL483), this protein is L-rhamnose mutarotase.